Reading from the N-terminus, the 257-residue chain is NAD-capped RNA hydrolase NudC (257 aa).

The substrate site is built by K25 and R69. C98 and C101 together coordinate Zn(2+). E111 provides a ligand contact to substrate. 2 residues coordinate Zn(2+): C116 and C119. Y124 lines the substrate pocket. The region spanning P125–T248 is the Nudix hydrolase domain. A divalent metal cation contacts are provided by A158, E174, and E178. Positions G159–G180 match the Nudix box motif. Q192–S199 is a substrate binding site. E219 lines the a divalent metal cation pocket. A241 is a substrate binding site.

Belongs to the Nudix hydrolase family. NudC subfamily. Homodimer. Mg(2+) serves as cofactor. The cofactor is Mn(2+). Requires Zn(2+) as cofactor.

The catalysed reaction is a 5'-end NAD(+)-phospho-ribonucleoside in mRNA + H2O = a 5'-end phospho-adenosine-phospho-ribonucleoside in mRNA + beta-nicotinamide D-ribonucleotide + 2 H(+). It carries out the reaction NAD(+) + H2O = beta-nicotinamide D-ribonucleotide + AMP + 2 H(+). It catalyses the reaction NADH + H2O = reduced beta-nicotinamide D-ribonucleotide + AMP + 2 H(+). MRNA decapping enzyme that specifically removes the nicotinamide adenine dinucleotide (NAD) cap from a subset of mRNAs by hydrolyzing the diphosphate linkage to produce nicotinamide mononucleotide (NMN) and 5' monophosphate mRNA. The NAD-cap is present at the 5'-end of some mRNAs and stabilizes RNA against 5'-processing. Has preference for mRNAs with a 5'-end purine. Catalyzes the hydrolysis of a broad range of dinucleotide pyrophosphates. The sequence is that of NAD-capped RNA hydrolase NudC from Escherichia coli O157:H7.